Reading from the N-terminus, the 135-residue chain is Large ribosomal subunit protein uL16c (135 aa).

This sequence belongs to the universal ribosomal protein uL16 family. As to quaternary structure, part of the 50S ribosomal subunit.

Its subcellular location is the plastid. The protein localises to the chloroplast. The protein is Large ribosomal subunit protein uL16c of Piper cenocladum (Ant piper).